A 355-amino-acid chain; its full sequence is Isocitrate dehydrogenase [NAD] subunit gamma, mitochondrial (355 aa).

Position 1 (Ile-1) is a transit peptide, mitochondrion. Residues Thr-82 and Asn-95 each contribute to the citrate site. Positions 98, 129, and 216 each coordinate substrate. Asp-216 provides a ligand contact to Mn(2+). ADP is bound by residues Asn-274, Thr-275, and Asn-286.

This sequence belongs to the isocitrate and isopropylmalate dehydrogenases family. Heterooligomer of subunits alpha (IDH3A), beta (IDH3B), and gamma (IDH3G) in the apparent ratio of 2:1:1. The heterodimer containing one IDH3A and one IDH3B subunit and the heterodimer containing one IDH3A and one IDH3G subunit assemble into a heterotetramer (which contains two subunits of IDH3A, one of IDH3B and one of IDH3G) and further into the heterooctamer. Mg(2+) is required as a cofactor. The cofactor is Mn(2+).

The protein localises to the mitochondrion. The heterotetramer and the heterodimer composed of IDH3A and IDH3G subunits can be allosterically activated by citrate (CIT) or/and ADP, and the two activators can act independently or synergistically. The heterodimer composed of IDH3A and IDH3B subunits cannot be allosterically regulated and the allosteric regulation of the heterotetramer is through the IDH3G subunit and not the IDH3B subunit. The IDH3G subunit contains the allosteric site which consists of a CIT-binding site and an ADP-binding site, and the binding of CIT and ADP causes conformational changes at the allosteric site which are transmitted to the active site in the catalytic subunit (IDH3A) through a cascade of conformational changes at the heterodimer interface, leading to stabilization of the isocitrate-binding at the active site and thus activation of the enzyme. ATP can activate the heterotetramer and the heterodimer composed of IDH3A and IDH3G subunits at low concentrations but inhibits their activities at high concentrations, whereas ATP exhibits only inhibitory effect on the heterodimer composed of IDH3A and IDH3B subunits. Regulatory subunit which plays a role in the allosteric regulation of the enzyme catalyzing the decarboxylation of isocitrate (ICT) into alpha-ketoglutarate. The heterodimer composed of the alpha (IDH3A) and beta (IDH3B) subunits and the heterodimer composed of the alpha (IDH3A) and gamma (IDH3G) subunits, have considerable basal activity but the full activity of the heterotetramer (containing two subunits of IDH3A, one of IDH3B and one of IDH3G) requires the assembly and cooperative function of both heterodimers. In Macaca fascicularis (Crab-eating macaque), this protein is Isocitrate dehydrogenase [NAD] subunit gamma, mitochondrial (IDH3G).